The following is a 222-amino-acid chain: Thymidylate kinase (222 aa).

ATP is bound at residue 7–14 (GIDGAGKS).

This sequence belongs to the thymidylate kinase family.

It catalyses the reaction dTMP + ATP = dTDP + ADP. Phosphorylation of dTMP to form dTDP in both de novo and salvage pathways of dTTP synthesis. In Chlorobium chlorochromatii (strain CaD3), this protein is Thymidylate kinase.